The following is a 253-amino-acid chain: Probable transcriptional regulatory protein RBE_0568 (253 aa).

The segment at 1–21 (MAGHSKFKNIQHRKGAQDKKR) is disordered.

Belongs to the TACO1 family.

The protein resides in the cytoplasm. The sequence is that of Probable transcriptional regulatory protein RBE_0568 from Rickettsia bellii (strain RML369-C).